A 520-amino-acid polypeptide reads, in one-letter code: MSYTKKTSYSVKSSSSGSVPRSFSSMSYSGPSVTRQSYSVRTSYGGANRGMGAGMGGGGFISSSSAYGLGMGMGSGVVAPIQAVTFNKSLLAPLNLEIDPNIQVVRTQEKEQMKSLNNRFASFIDKVRFLEQQNKMLETKWSLLQNQTATRSNIDAMFEAYINNLRRQLDSLGNDKMKLEADLHNMQGLVEDFKNKYEDEINKRTECENDFVLIKKDVDEAYMNKVELEAKLESLSDEINFLRQIFEEEIRELQSQIKDTSVVVEMDNSRNLDMDAIVAEVRAQYEDIANRSRAEAEMWYKSKYEEMQTSATKYGDDLRSTKTEIADLNRMIQRLQSEIDAVKGQRSNLENQIAEAEERGELAVRDAKARIKDLEDALQRAKQDMARQIREYQELMNVKLALDIEIATYRKLLEGEEDRLLSGIKSVNISKQSTSYGSYPMESASSGYSNYSSGYGGGYGGGYSSGGGYSSGGGYSSGGGYSSGSGYSETVSQTKKSVVIKMIETKDGRVVSESSEVVQD.

Residues 1–27 (MSYTKKTSYSVKSSSSGSVPRSFSSMS) are compositionally biased toward low complexity. The disordered stretch occupies residues 1-33 (MSYTKKTSYSVKSSSSGSVPRSFSSMSYSGPSV). A head region spans residues 1–108 (MSYTKKTSYS…DPNIQVVRTQ (108 aa)). Residues 109 to 144 (EKEQMKSLNNRFASFIDKVRFLEQQNKMLETKWSLL) form a coil 1A region. One can recognise an IF rod domain in the interval 109–420 (EKEQMKSLNN…KLLEGEEDRL (312 aa)). The tract at residues 145–157 (QNQTATRSNIDAM) is linker 1. The coil 1B stretch occupies residues 158 to 253 (FEAYINNLRR…QIFEEEIREL (96 aa)). Residues 254-273 (QSQIKDTSVVVEMDNSRNLD) form a linker 12 region. The coil 2 stretch occupies residues 274–420 (MDAIVAEVRA…KLLEGEEDRL (147 aa)). The interval 421–520 (LSGIKSVNIS…VSESSEVVQD (100 aa)) is tail.

Belongs to the intermediate filament family.

Functionally, one of the non-neuronal predominant intermediate filament proteins of the visual pathway. The polypeptide is Intermediate filament protein ON3 (Carassius auratus (Goldfish)).